Here is a 305-residue protein sequence, read N- to C-terminus: tRNA pseudouridine synthase B (305 aa).

The active-site Nucleophile is the Asp-39. One can recognise a PUA domain in the interval 237–305; sequence LPVIIVPGEF…FLLKPHKVLK (69 aa).

It belongs to the pseudouridine synthase TruB family. Type 1 subfamily.

It carries out the reaction uridine(55) in tRNA = pseudouridine(55) in tRNA. Functionally, responsible for synthesis of pseudouridine from uracil-55 in the psi GC loop of transfer RNAs. This chain is tRNA pseudouridine synthase B, found in Moorella thermoacetica (strain ATCC 39073 / JCM 9320).